The primary structure comprises 294 residues: Protein PET54 (294 aa).

The protein resides in the mitochondrion inner membrane. Functionally, activator of specific mitochondrial mRNAs. PET54 is involved in the excision of intron aI5-beta from pre-mRNA for cytochrome c oxidase I (COX1) and plays a role in promoting the translation of COX3. The protein is Protein PET54 (PET54) of Saccharomyces bayanus (Yeast).